The primary structure comprises 460 residues: Gastric inhibitory polypeptide receptor (460 aa).

Residues 1–18 form the signal peptide; it reads MPLRLLLLLLWLWGLQWA. Topologically, residues 19–134 are extracellular; sequence ETDSEGQTTT…DQTLILERLQ (116 aa). Intrachain disulfides connect cysteine 42–cysteine 66, cysteine 57–cysteine 99, and cysteine 80–cysteine 114. 3 N-linked (GlcNAc...) asparagine glycosylation sites follow: asparagine 58, asparagine 68, and asparagine 73. Residues 135 to 155 form a helical membrane-spanning segment; that stretch reads IMYTVGYSLSLTTLLLALLIL. Topologically, residues 156-166 are cytoplasmic; the sequence is SLFRRLHCTRN. Residues 167 to 185 form a helical membrane-spanning segment; the sequence is YIHMNLFTSFMLRAAAILT. Over 186–222 the chain is Extracellular; it reads RDQLLPPLGPYTGDQAPTPWNQALAACRTAQIMTQYC. The helical transmembrane segment at 223–243 threads the bilayer; sequence VGANYTWLLVEGVYLHHLLVI. The Cytoplasmic segment spans residues 244-255; sequence VGRSEKGHFRCY. The chain crosses the membrane as a helical span at residues 256-276; that stretch reads LLLGWGAPALFVIPWVIVRYL. Over 277 to 297 the chain is Extracellular; the sequence is RENTQCWERNEVKAIWWIIRT. A helical transmembrane segment spans residues 298–318; the sequence is PILITILINFLIFIRILGILV. The Cytoplasmic segment spans residues 319 to 337; the sequence is SKLRTRQMRCPDYRLRLAR. A helical membrane pass occupies residues 338–358; sequence STLTLVPLLGVHEVVFAPVTE. Over 359–370 the chain is Extracellular; sequence EQVEGSLRFAKL. The helical transmembrane segment at 371-391 threads the bilayer; that stretch reads AFEIFLSSFQGFLVSVLYCFI. Over 392–460 the chain is Cytoplasmic; the sequence is NKEVQSEIRQ…PGDEVLESYC (69 aa).

The protein belongs to the G-protein coupled receptor 2 family. May form homodimers and heterodimers with GLP1R. Post-translationally, N-glycosylation is required for cell surface expression and lengthens receptor half-life by preventing degradation in the ER.

It is found in the cell membrane. Its function is as follows. This is a receptor for GIP. The activity of this receptor is mediated by G proteins which activate adenylyl cyclase. This Mus musculus (Mouse) protein is Gastric inhibitory polypeptide receptor (Gipr).